We begin with the raw amino-acid sequence, 193 residues long: Small COPII coat GTPase SAR1 (193 aa).

The STAR; SAR1-N-terminal activation recruitment. Required for the activation and subsequent recruitment to ER membrane motif lies at 3–5 (FLW). The mediates recruitment to ER membranes stretch occupies residues 11-15 (VLNML). Asp-30 contacts Mg(2+). The GDP site is built by Asn-31, Ala-32, Gly-33, Lys-34, Thr-35, and Thr-36. Residue Asn-31 coordinates GTP. GTP contacts are provided by Gly-33, Lys-34, Thr-35, and Thr-36. Asp-71 lines the Mg(2+) pocket. Asn-130, Lys-131, Asp-133, Val-176, and Leu-177 together coordinate GDP. GTP contacts are provided by Asn-130, Lys-131, Asp-133, Val-176, and Leu-177.

It belongs to the small GTPase superfamily. SAR1 family. As to quaternary structure, homodimer; upon association with membrane. Part of the coat protein complex II/COPII, composed of SEC23/24 and SEC13/31 heterodimers, that it helps recruit and assemble on endoplasmic reticulum (ER) membranes at ER exit sites.

It is found in the endoplasmic reticulum membrane. The protein resides in the golgi apparatus. Its subcellular location is the golgi stack membrane. It localises to the cytoplasm. The protein localises to the cytosol. The catalysed reaction is GTP + H2O = GDP + phosphate + H(+). Small GTPases activation is mediated by guanine exchange factors (GEF), while inactivation through hydrolysis of the bound GTP is stimulated by GTPase activating proteins (GAP). Small GTPase that cycles between an active GTP-bound and an inactive GDP-bound state and mainly functions in vesicle-mediated endoplasmic reticulum (ER) to Golgi transport. The active GTP-bound form inserts into the endoplasmic reticulum membrane where it recruits the remainder of the coat protein complex II/COPII. The coat protein complex II assembling and polymerizing on endoplasmic reticulum membrane is responsible for both the sorting of cargos and the deformation and budding of membranes into vesicles destined to the Golgi. Plays a role in transporting the tyrosine kinase receptor let-23 from the endoplasmic reticulum to the plasma membrane of vulval precursor cells. The sequence is that of Small COPII coat GTPase SAR1 from Caenorhabditis elegans.